A 166-amino-acid polypeptide reads, in one-letter code: Large ribosomal subunit protein uL10 (166 aa).

Belongs to the universal ribosomal protein uL10 family. In terms of assembly, part of the ribosomal stalk of the 50S ribosomal subunit. The N-terminus interacts with L11 and the large rRNA to form the base of the stalk. The C-terminus forms an elongated spine to which L12 dimers bind in a sequential fashion forming a multimeric L10(L12)X complex.

Its function is as follows. Forms part of the ribosomal stalk, playing a central role in the interaction of the ribosome with GTP-bound translation factors. The sequence is that of Large ribosomal subunit protein uL10 from Pseudomonas syringae pv. tomato (strain ATCC BAA-871 / DC3000).